Consider the following 113-residue polypeptide: Integration host factor subunit alpha (113 aa).

A disordered region spans residues 87–113 (NALNGEVSDETTEGADDDDDEEGEGDE). Acidic residues predominate over residues 93-113 (VSDETTEGADDDDDEEGEGDE).

It belongs to the bacterial histone-like protein family. Heterodimer of an alpha and a beta chain.

Functionally, this protein is one of the two subunits of integration host factor, a specific DNA-binding protein that functions in genetic recombination as well as in transcriptional and translational control. In Anaeromyxobacter dehalogenans (strain 2CP-1 / ATCC BAA-258), this protein is Integration host factor subunit alpha.